We begin with the raw amino-acid sequence, 655 residues long: Acetyl-coenzyme A synthetase (655 aa).

Residues 196–199 and T316 contribute to the CoA site; that span reads RGGR. Residues 392 to 394, 416 to 421, D508, and R523 each bind ATP; these read GEP and DTWWQT. A CoA-binding site is contributed by S531. R534 contacts ATP. Positions 545, 547, and 550 each coordinate Mg(2+). At K620 the chain carries N6-acetyllysine.

The protein belongs to the ATP-dependent AMP-binding enzyme family. It depends on Mg(2+) as a cofactor. In terms of processing, acetylated. Deacetylation by the SIR2-homolog deacetylase activates the enzyme.

The catalysed reaction is acetate + ATP + CoA = acetyl-CoA + AMP + diphosphate. Functionally, catalyzes the conversion of acetate into acetyl-CoA (AcCoA), an essential intermediate at the junction of anabolic and catabolic pathways. AcsA undergoes a two-step reaction. In the first half reaction, AcsA combines acetate with ATP to form acetyl-adenylate (AcAMP) intermediate. In the second half reaction, it can then transfer the acetyl group from AcAMP to the sulfhydryl group of CoA, forming the product AcCoA. This is Acetyl-coenzyme A synthetase from Nitrosomonas europaea (strain ATCC 19718 / CIP 103999 / KCTC 2705 / NBRC 14298).